Consider the following 464-residue polypeptide: Soluble pyridine nucleotide transhydrogenase (464 aa).

35–44 (DSRRQVGGNC) contributes to the FAD binding site.

This sequence belongs to the class-I pyridine nucleotide-disulfide oxidoreductase family. FAD serves as cofactor.

The protein localises to the cytoplasm. The enzyme catalyses NAD(+) + NADPH = NADH + NADP(+). Its function is as follows. Conversion of NADPH, generated by peripheral catabolic pathways, to NADH, which can enter the respiratory chain for energy generation. The protein is Soluble pyridine nucleotide transhydrogenase of Pseudomonas putida (strain W619).